Here is a 219-residue protein sequence, read N- to C-terminus: Probable N-acetyltransferase camello (219 aa).

Helical transmembrane passes span 44 to 64 (FITF…VLAL) and 66 to 86 (SLVA…HGLA). One can recognise an N-acetyltransferase domain in the interval 62-211 (LALTSLVALL…VHQYTSFTVA (150 aa)).

This sequence belongs to the camello family.

Its subcellular location is the golgi apparatus membrane. Functionally, plays a role in regulation of gastrulation, possibly by controlled reduction of cell adhesion in the periblastopore region which is necessary for optimal cell motility. In Xenopus tropicalis (Western clawed frog), this protein is Probable N-acetyltransferase camello.